The chain runs to 259 residues: Indole-3-glycerol phosphate synthase (259 aa).

The protein belongs to the TrpC family.

The catalysed reaction is 1-(2-carboxyphenylamino)-1-deoxy-D-ribulose 5-phosphate + H(+) = (1S,2R)-1-C-(indol-3-yl)glycerol 3-phosphate + CO2 + H2O. Its pathway is amino-acid biosynthesis; L-tryptophan biosynthesis; L-tryptophan from chorismate: step 4/5. The chain is Indole-3-glycerol phosphate synthase from Dehalococcoides mccartyi (strain ATCC BAA-2100 / JCM 16839 / KCTC 5957 / BAV1).